A 108-amino-acid polypeptide reads, in one-letter code: DNA-binding protein HBbu (108 aa).

This sequence belongs to the bacterial histone-like protein family.

Its function is as follows. Histone-like DNA-binding protein which is capable of wrapping DNA to stabilize it, and thus to prevent its denaturation under extreme environmental conditions. The protein is DNA-binding protein HBbu (hbb) of Borrelia garinii subsp. bavariensis (strain ATCC BAA-2496 / DSM 23469 / PBi) (Borreliella bavariensis).